The sequence spans 544 residues: MAAKQLIFDESARHALLRGVEKLSKAVKCTLGPAGRNVILDKKFGSPTITKDGVTVAKEVELEDPWENMGAQLVKEVASKTSDVAGDGTTTATVLAESIYKEGLKNVTAGANPMDLKRGVDKAVQAVVKQLKEISHIVKGKEEIKQVATVSANWDTSIGEIIADALDKVGKDGTVTVEEAKHIETTLEVVEGMQFDRGYISPYFVTNAEELEAVLENAYILIHEKKISNLKDLLPLLEKIAKAGRPLLIIAEDVEGEALATLVVNKLRGTLQVCAVKAPGFGDRRKAMLEDIAILTGGRCLTEDLGIKLENVQLEDLGRAKRIIVEKENTTIIEGSGSRSEIQGRINQIRRQIEETTSDYDREKLQERLAKLAGGVAVIHVGAATETELKEKKARVEDALHATRAAVEEGIVPGGGVALLRCQKAIEGLSLKGDEQIGANIVYKALEYPLKTLADNAGLEGSVIVNEVKAKKGNEGFDVAKRSYVDMFEAGIVDPTKVTRTALENAASIAGLLLTTEAMVTEIPEKEKKPATPAGAGGMGDMEY.

Residues 30–33, K51, 87–91, G415, 478–480, and D494 each bind ATP; these read TLGP, DGTTT, and DVA. The segment at 524-544 is disordered; sequence PEKEKKPATPAGAGGMGDMEY. Residues 535-544 show a composition bias toward gly residues; it reads GAGGMGDMEY.

Belongs to the chaperonin (HSP60) family. In terms of assembly, forms a cylinder of 14 subunits composed of two heptameric rings stacked back-to-back. Interacts with the co-chaperonin GroES.

It localises to the cytoplasm. The catalysed reaction is ATP + H2O + a folded polypeptide = ADP + phosphate + an unfolded polypeptide.. Its function is as follows. Together with its co-chaperonin GroES, plays an essential role in assisting protein folding. The GroEL-GroES system forms a nano-cage that allows encapsulation of the non-native substrate proteins and provides a physical environment optimized to promote and accelerate protein folding. In Methylacidiphilum infernorum (isolate V4) (Methylokorus infernorum (strain V4)), this protein is Chaperonin GroEL.